The chain runs to 183 residues: Putative manganese efflux pump MntP (183 aa).

Helical transmembrane passes span 3–23, 43–63, 66–86, 107–127, 134–154, and 161–181; these read TISVLITALALSMDAMSLSIY, TFGIFQFAMALVGSLSGILFI, ISLYSKYVSFAIFLFLGLMML, LIIMGIATSLDALLVGLTFSI, FLYTVEIGVITAIIAGLGFIL, and ILGQKSHFLGAALLIFISINI.

Belongs to the MntP (TC 9.B.29) family.

The protein resides in the cell inner membrane. Its function is as follows. Probably functions as a manganese efflux pump. The sequence is that of Putative manganese efflux pump MntP from Fusobacterium nucleatum subsp. nucleatum (strain ATCC 25586 / DSM 15643 / BCRC 10681 / CIP 101130 / JCM 8532 / KCTC 2640 / LMG 13131 / VPI 4355).